The chain runs to 391 residues: 8-amino-7-oxononanoate synthase 1 (391 aa).

Gly-108–Phe-109 provides a ligand contact to pyridoxal 5'-phosphate. His-133 contributes to the substrate binding site. Residues Ser-180, Asp-205–His-208, and Thr-236–Lys-239 each bind pyridoxal 5'-phosphate. N6-(pyridoxal phosphate)lysine is present on Lys-239. A substrate-binding site is contributed by Thr-353.

It belongs to the class-II pyridoxal-phosphate-dependent aminotransferase family. BioF subfamily. As to quaternary structure, homodimer. The cofactor is pyridoxal 5'-phosphate.

It carries out the reaction 6-carboxyhexanoyl-[ACP] + L-alanine + H(+) = (8S)-8-amino-7-oxononanoate + holo-[ACP] + CO2. It functions in the pathway cofactor biosynthesis; biotin biosynthesis. Its function is as follows. Catalyzes the decarboxylative condensation of pimeloyl-[acyl-carrier protein] and L-alanine to produce 8-amino-7-oxononanoate (AON), [acyl-carrier protein], and carbon dioxide. The polypeptide is 8-amino-7-oxononanoate synthase 1 (Bacillus velezensis (strain DSM 23117 / BGSC 10A6 / LMG 26770 / FZB42) (Bacillus amyloliquefaciens subsp. plantarum)).